We begin with the raw amino-acid sequence, 473 residues long: MAP kinase-activated protein kinase 5 (473 aa).

Positions 22-304 (INWTQKLGAG…IEGVLDHPWL (283 aa)) constitute a Protein kinase domain. ATP is bound by residues 28–36 (LGAGISGPV) and K51. A Phosphoserine; by PKA modification is found at S115. D148 serves as the catalytic Proton acceptor. At T182 the chain carries Phosphothreonine; by MAPK11, MAPK14, MAPK4, MAPK6 and PKA. A phosphoserine mark is found at S212 and S354. Residues 409-440 (ENEDEKLNEVMQEAWKYNRECKLLRDTLQSFS) are a coiled coil.

Belongs to the protein kinase superfamily. CAMK Ser/Thr protein kinase family. As to quaternary structure, interacts with ERK3/MAPK6 and ERK4/MAPK4 (via FRIEDE motif); the interaction is direct. Interacts with YWHAE; the interaction prevents phosphorylation of HSP27/HSPB1 leading to disrupt F-actin polymerization. Interacts with SQSTM1. In terms of processing, phosphorylated on Thr-182 ERK3/MAPK6 or ERK4/MAPK4; which is the regulatory phosphorylation site and is located on the T-loop/loop 12, leading to activation. Phosphorylation at Thr-182 by p38-alpha/MAPK14, p38-beta/MAPK11 is subject to debate. Phosphorylated at Ser-115 by PKA/PRKACA, leading to localization to the cytoplasm. Autophosphorylated. Expressed ubiquitously.

Its subcellular location is the cytoplasm. The protein resides in the nucleus. It catalyses the reaction L-seryl-[protein] + ATP = O-phospho-L-seryl-[protein] + ADP + H(+). It carries out the reaction L-threonyl-[protein] + ATP = O-phospho-L-threonyl-[protein] + ADP + H(+). Activated following phosphorylation at Thr-182 by p38-alpha/MAPK14, p38-beta/MAPK11, ERK2/MAPK1, ERK3/MAPK6, and ERK4/MAPK4. Activated by stress-related extracellular stimuli; such as H(2)O(2), arsenite, anisomycin TNF alpha and also PMA and the calcium ionophore A23187; but to a lesser extent. In vitro, activated by SQSTM1. Inhibited by diterpenoid alkaloid noroxoaconitine. Functionally, tumor suppressor serine/threonine-protein kinase involved in mTORC1 signaling and post-transcriptional regulation. Phosphorylates FOXO3, ERK3/MAPK6, ERK4/MAPK4, HSP27/HSPB1, p53/TP53 and RHEB. Acts as a tumor suppressor by mediating Ras-induced senescence and phosphorylating p53/TP53. Involved in post-transcriptional regulation of MYC by mediating phosphorylation of FOXO3: phosphorylation of FOXO3 leads to promote nuclear localization of FOXO3, enabling expression of miR-34b and miR-34c, 2 post-transcriptional regulators of MYC that bind to the 3'UTR of MYC transcript and prevent MYC translation. Acts as a negative regulator of mTORC1 signaling by mediating phosphorylation and inhibition of RHEB. Part of the atypical MAPK signaling via its interaction with ERK3/MAPK6 or ERK4/MAPK4: the precise role of the complex formed with ERK3/MAPK6 or ERK4/MAPK4 is still unclear, but the complex follows a complex set of phosphorylation events: upon interaction with atypical MAPK (ERK3/MAPK6 or ERK4/MAPK4), ERK3/MAPK6 (or ERK4/MAPK4) is phosphorylated and then mediates phosphorylation and activation of MAPKAPK5, which in turn phosphorylates ERK3/MAPK6 (or ERK4/MAPK4). Mediates phosphorylation of HSP27/HSPB1 in response to PKA/PRKACA stimulation, inducing F-actin rearrangement. The chain is MAP kinase-activated protein kinase 5 (MAPKAPK5) from Homo sapiens (Human).